The chain runs to 317 residues: Flagellar hook-associated protein 3 (317 aa).

This sequence belongs to the bacterial flagellin family.

It localises to the secreted. It is found in the bacterial flagellum. The protein is Flagellar hook-associated protein 3 (flgL) of Salmonella typhimurium (strain LT2 / SGSC1412 / ATCC 700720).